Here is a 491-residue protein sequence, read N- to C-terminus: Glutamyl-tRNA(Gln) amidotransferase subunit A (491 aa).

Catalysis depends on charge relay system residues K81 and S156. The Acyl-ester intermediate role is filled by S180.

The protein belongs to the amidase family. GatA subfamily. In terms of assembly, heterotrimer of A, B and C subunits.

It catalyses the reaction L-glutamyl-tRNA(Gln) + L-glutamine + ATP + H2O = L-glutaminyl-tRNA(Gln) + L-glutamate + ADP + phosphate + H(+). Functionally, allows the formation of correctly charged Gln-tRNA(Gln) through the transamidation of misacylated Glu-tRNA(Gln) in organisms which lack glutaminyl-tRNA synthetase. The reaction takes place in the presence of glutamine and ATP through an activated gamma-phospho-Glu-tRNA(Gln). This chain is Glutamyl-tRNA(Gln) amidotransferase subunit A, found in Alcanivorax borkumensis (strain ATCC 700651 / DSM 11573 / NCIMB 13689 / SK2).